The chain runs to 464 residues: Uronate isomerase (464 aa).

Belongs to the metallo-dependent hydrolases superfamily. Uronate isomerase family.

The catalysed reaction is D-glucuronate = D-fructuronate. The enzyme catalyses aldehydo-D-galacturonate = keto-D-tagaturonate. It participates in carbohydrate metabolism; pentose and glucuronate interconversion. The polypeptide is Uronate isomerase (Caldicellulosiruptor bescii (strain ATCC BAA-1888 / DSM 6725 / KCTC 15123 / Z-1320) (Anaerocellum thermophilum)).